The chain runs to 547 residues: Chaperonin GroEL (547 aa).

ATP-binding positions include 30-33 (TLGP), Lys-51, 87-91 (DGTTT), Gly-415, 479-481 (NAA), and Asp-495.

It belongs to the chaperonin (HSP60) family. In terms of assembly, forms a cylinder of 14 subunits composed of two heptameric rings stacked back-to-back. Interacts with the co-chaperonin GroES.

It localises to the cytoplasm. The enzyme catalyses ATP + H2O + a folded polypeptide = ADP + phosphate + an unfolded polypeptide.. Functionally, together with its co-chaperonin GroES, plays an essential role in assisting protein folding. The GroEL-GroES system forms a nano-cage that allows encapsulation of the non-native substrate proteins and provides a physical environment optimized to promote and accelerate protein folding. The chain is Chaperonin GroEL from Pseudomonas fluorescens (strain ATCC BAA-477 / NRRL B-23932 / Pf-5).